A 465-amino-acid chain; its full sequence is UDP-N-acetylmuramate--L-alanine ligase (465 aa).

115–121 (GAHGKTT) lines the ATP pocket.

This sequence belongs to the MurCDEF family.

The protein localises to the cytoplasm. The catalysed reaction is UDP-N-acetyl-alpha-D-muramate + L-alanine + ATP = UDP-N-acetyl-alpha-D-muramoyl-L-alanine + ADP + phosphate + H(+). Its pathway is cell wall biogenesis; peptidoglycan biosynthesis. Cell wall formation. In Coxiella burnetii (strain CbuK_Q154) (Coxiella burnetii (strain Q154)), this protein is UDP-N-acetylmuramate--L-alanine ligase.